The primary structure comprises 216 residues: Probable GTP-binding protein EngB (216 aa).

An EngB-type G domain is found at 37-214 (QGLEVAFAGR…RAAIIKLVAE (178 aa)). GTP-binding positions include 45-52 (GRSNVGKS), 72-76 (GRTQE), 92-95 (DMPG), 159-162 (TKAD), and 193-195 (TSS). Mg(2+) contacts are provided by S52 and T74.

This sequence belongs to the TRAFAC class TrmE-Era-EngA-EngB-Septin-like GTPase superfamily. EngB GTPase family. Mg(2+) serves as cofactor.

Functionally, necessary for normal cell division and for the maintenance of normal septation. This is Probable GTP-binding protein EngB from Rhodopseudomonas palustris (strain BisA53).